An 833-amino-acid polypeptide reads, in one-letter code: Enhancer of filamentation 1 (833 aa).

The SH3 domain occupies 3–65 (ARNLMARALY…PGNRVKLLIG (63 aa)). 7 positions are modified to phosphotyrosine: Y91, Y163, Y165, Y176, Y188, Y213, and Y222. Positions 237-258 (EKEYDFPPPMKQDGKPDTRPEG) are disordered. A compositionally biased stretch (basic and acidic residues) spans 248-258 (QDGKPDTRPEG). Position 295 is a phosphoserine (S295). Disordered stretches follow at residues 297 to 316 (SLHH…SDAY), 326 to 403 (EVPT…RLRL), and 560 to 623 (PANS…SERS). Positions 304–314 (QLGQSGDTQSD) are enriched in polar residues. A Phosphotyrosine modification is found at Y316. Residues 331–343 (TSEKANPEERDGV) are compositionally biased toward basic and acidic residues. Residues 350 to 833 (NPADAKGSRD…KRSLLEMATF (484 aa)) form an interacts with CTTN region. The Caspase cleavage related site motif lies at 359–362 (DVVD). Phosphoserine is present on S368. Positions 368–396 (SFSSTGSTRSNMSTSSTSSKESSLSASPS) are enriched in low complexity. Residues 564–586 (HLKNGPNSIMNSSEYTHPGSQMQ) show a composition bias toward polar residues. Positions 709–759 (FYYDQCETHFISLLNAIDALFSCVSSAQPPRIFVAHSKFVILSAHKLVFIG) are divergent helix-loop-helix motif. Residues 709-833 (FYYDQCETHF…KRSLLEMATF (125 aa)) form a required for interaction with PLK1 region. S779 is modified (phosphoserine). The residue at position 803 (T803) is a Phosphothreonine.

Belongs to the CAS family. In terms of assembly, homodimer. Forms heterodimers with BCAR1/p130cas. Forms complexes with PTK2B/RAFTK, adapter protein CRKL and LYN kinase. Part of a complex composed of NEDD9, AURKA and CTTN; within the complex NEDD9 acts as a scaffold protein and is required for complex formation. Part of a ternary complex composed of SMAD3, ITCH/AIP4 and NEDD9/HEF1; within the complex NEDD9/HEF1 interacts (via N-terminus) with ITCH/AIP4 (via WW domains); the complex mediates ubiquitination and proteasomal degradation of NEDD9/HEF1. Interacts with SMAD3; the interaction promotes NEDD9 ubiquitination and proteasomal degradation. Interacts with ID2. Interacts with CTTN (via N-terminus). Interacts with MICAL. Interacts with TXNL4/DIM1. Interacts with BCAR3 (via Ras-GEF domain). Interacts with SH2D3C isoform 1 and isoform 2. Interacts with ECT2. Interacts with PTPN11/SHP-2 (via SH2 domains); the interaction is enhanced when NEDD9/CAS-L is tyrosine phosphorylated. Interacts (via C-terminus) with PLK1 (via polo box domains). Interacts with NKX2-5. Interacts with SMAD3; the interaction is inhibited by oxidation of NEDD9. Interacts with NEDD9/HEF1; interaction is induced by CXCL12 promotion of ABL-mediated phosphorylation of NEDD9/HEF1. Interacts (via SH3 domain) with PTK2/FAK. Interacts with FYN; in the presence of PTK2. Interacts with INPPL1/SHIP2. Polyubiquitinated by ITCH/AIP4, leading to proteasomal degradation. Post-translationally, PTK2/FAK1 phosphorylates the protein at the YDYVHL motif (conserved among all cas proteins) following integrin stimulation. The SRC family kinases (FYN, SRC, LCK and CRK) are recruited to the phosphorylated sites and can phosphorylate other tyrosine residues. Ligation of either integrin beta-1 or B-cell antigen receptor on tonsillar B-cells and B-cell lines promotes tyrosine phosphorylation and both integrin and BCR-mediated tyrosine phosphorylation requires an intact actin network. Phosphorylation is required to recruit NEDD9 to T-cell receptor microclusters at the periphery of newly formed immunological synapses. In fibroblasts transformation with oncogene v-ABL results in an increase in tyrosine phosphorylation. Transiently phosphorylated following CD3 cross-linking and this phosphorylated form binds to CRKL and C3G. A mutant lacking the SH3 domain is phosphorylated upon CD3 cross-linking but not upon integrin beta-1 cross-linking. Tyrosine phosphorylation occurs upon stimulation of the G-protein coupled C1a calcitonin receptor. Calcitonin-stimulated tyrosine phosphorylation is mediated by calcium- and protein kinase C-dependent mechanisms and requires the integrity of the actin cytoskeleton. Phosphorylation at Ser-368 induces proteasomal degradation. Phosphorylated by LYN. Phosphorylation at Ser-779 by CSNK1D or CSNK1E, or phosphorylation of Thr-803 by CSNK1E enhances the interaction of NEDD9 with PLK1. In terms of tissue distribution, expressed in splenic lymphocytes (at protein level). Expressed in T-cells (at protein level). Expressed in the thymus. Expressed throughout the brain however particularly abundant in the cortex and hippocampus.

It localises to the cytoplasm. The protein localises to the cell cortex. It is found in the nucleus. The protein resides in the golgi apparatus. Its subcellular location is the cell projection. It localises to the lamellipodium. The protein localises to the cell junction. It is found in the focal adhesion. The protein resides in the cytoskeleton. Its subcellular location is the spindle pole. It localises to the cilium. The protein localises to the cilium basal body. It is found in the basolateral cell membrane. Functionally, scaffolding protein which plays a central coordinating role for tyrosine-kinase-based signaling related to cell adhesion. As a focal adhesion protein, plays a role in embryonic fibroblast migration. May play an important role in integrin beta-1 or B cell antigen receptor (BCR) mediated signaling in B- and T-cells. Integrin beta-1 stimulation leads to recruitment of various proteins including CRKl and SHPTP2 to the tyrosine phosphorylated form. Promotes adhesion and migration of lymphocytes; as a result required for the correct migration of lymphocytes to the spleen and other secondary lymphoid organs. Plays a role in the organization of T-cell F-actin cortical cytoskeleton and the centralization of T-cell receptor microclusters at the immunological synapse. Negatively regulates cilia outgrowth in polarized cysts. Modulates cilia disassembly via activation of AURKA-mediated phosphorylation of HDAC6 and subsequent deacetylation of alpha-tubulin. Positively regulates RANKL-induced osteoclastogenesis. Required for the maintenance of hippocampal dendritic spines in the dentate gyrus and CA1 regions, thereby involved in spatial learning and memory. The sequence is that of Enhancer of filamentation 1 from Mus musculus (Mouse).